A 467-amino-acid chain; its full sequence is Rhamnulokinase (467 aa).

ATP is bound at residue 11-15; it reads ASSGR. Substrate-binding positions include A78 and 235-237; that span reads HDT. D236 functions as the Proton acceptor in the catalytic mechanism. T257 is an ATP binding site. N294 provides a ligand contact to substrate. Q302 lines the ATP pocket. Residues C351 and C368 are joined by a disulfide bond. G400 serves as a coordination point for ATP.

Belongs to the rhamnulokinase family. Mg(2+) serves as cofactor.

The catalysed reaction is L-rhamnulose + ATP = L-rhamnulose 1-phosphate + ADP + H(+). It functions in the pathway carbohydrate degradation; L-rhamnose degradation; glycerone phosphate from L-rhamnose: step 2/3. Functionally, involved in the catabolism of L-rhamnose (6-deoxy-L-mannose). Catalyzes the transfer of the gamma-phosphate group from ATP to the 1-hydroxyl group of L-rhamnulose to yield L-rhamnulose 1-phosphate. This chain is Rhamnulokinase, found in Halalkalibacterium halodurans (strain ATCC BAA-125 / DSM 18197 / FERM 7344 / JCM 9153 / C-125) (Bacillus halodurans).